A 185-amino-acid polypeptide reads, in one-letter code: Threonylcarbamoyl-AMP synthase (185 aa).

Residues 1–185 (MKNLNQVVDA…AKTGNTLRQG (185 aa)) enclose the YrdC-like domain.

The protein belongs to the SUA5 family. TsaC subfamily.

The protein resides in the cytoplasm. The enzyme catalyses L-threonine + hydrogencarbonate + ATP = L-threonylcarbamoyladenylate + diphosphate + H2O. Required for the formation of a threonylcarbamoyl group on adenosine at position 37 (t(6)A37) in tRNAs that read codons beginning with adenine. Catalyzes the conversion of L-threonine, HCO(3)(-)/CO(2) and ATP to give threonylcarbamoyl-AMP (TC-AMP) as the acyladenylate intermediate, with the release of diphosphate. The sequence is that of Threonylcarbamoyl-AMP synthase from Aliivibrio fischeri (strain ATCC 700601 / ES114) (Vibrio fischeri).